Here is a 296-residue protein sequence, read N- to C-terminus: GTPase Era (296 aa).

One can recognise an Era-type G domain in the interval 7-174 (RAGFVAIVGR…LDEIAAGLPQ (168 aa)). Positions 15 to 22 (GRPNVGKS) are G1. 15 to 22 (GRPNVGKS) lines the GTP pocket. The tract at residues 41-45 (QTTRH) is G2. A G3 region spans residues 62–65 (DTPG). GTP is bound by residues 62–66 (DTPGF) and 123–126 (SKID). Residues 123 to 126 (SKID) form a G4 region. Residues 153–155 (VSA) are G5. The KH type-2 domain occupies 205-281 (VGDELPYGCT…HLEIYIKVRK (77 aa)).

The protein belongs to the TRAFAC class TrmE-Era-EngA-EngB-Septin-like GTPase superfamily. Era GTPase family. In terms of assembly, monomer.

The protein resides in the cytoplasm. The protein localises to the cell inner membrane. An essential GTPase that binds both GDP and GTP, with rapid nucleotide exchange. Plays a role in 16S rRNA processing and 30S ribosomal subunit biogenesis and possibly also in cell cycle regulation and energy metabolism. This chain is GTPase Era, found in Bordetella parapertussis (strain 12822 / ATCC BAA-587 / NCTC 13253).